The chain runs to 145 residues: Peptide methionine sulfoxide reductase MsrB (145 aa).

Residues 4–127 (SEELKQRIGD…NSAALKFIPY (124 aa)) enclose the MsrB domain. Catalysis depends on C116, which acts as the Nucleophile.

This sequence belongs to the MsrB Met sulfoxide reductase family.

It carries out the reaction L-methionyl-[protein] + [thioredoxin]-disulfide + H2O = L-methionyl-(R)-S-oxide-[protein] + [thioredoxin]-dithiol. This is Peptide methionine sulfoxide reductase MsrB from Streptococcus pyogenes serotype M6 (strain ATCC BAA-946 / MGAS10394).